Consider the following 78-residue polypeptide: D-alanyl carrier protein (78 aa).

The region spanning 1 to 78 (MAFRENVLEI…MIITQLEALK (78 aa)) is the Carrier domain. Residue Ser36 is modified to O-(pantetheine 4'-phosphoryl)serine.

It belongs to the DltC family. 4'-phosphopantetheine is transferred from CoA to a specific serine of apo-DCP.

It is found in the cytoplasm. Its pathway is cell wall biogenesis; lipoteichoic acid biosynthesis. Carrier protein involved in the D-alanylation of lipoteichoic acid (LTA). The loading of thioester-linked D-alanine onto DltC is catalyzed by D-alanine--D-alanyl carrier protein ligase DltA. The DltC-carried D-alanyl group is further transferred to cell membrane phosphatidylglycerol (PG) by forming an ester bond, probably catalyzed by DltD. D-alanylation of LTA plays an important role in modulating the properties of the cell wall in Gram-positive bacteria, influencing the net charge of the cell wall. The sequence is that of D-alanyl carrier protein from Listeria monocytogenes serotype 4a (strain HCC23).